Here is a 188-residue protein sequence, read N- to C-terminus: Ribosome-recycling factor (188 aa).

The protein belongs to the RRF family.

It is found in the cytoplasm. Responsible for the release of ribosomes from messenger RNA at the termination of protein biosynthesis. May increase the efficiency of translation by recycling ribosomes from one round of translation to another. This is Ribosome-recycling factor from Anaeromyxobacter dehalogenans (strain 2CP-1 / ATCC BAA-258).